The chain runs to 65 residues: Muscarinic m1-toxin2 (65 aa).

Intrachain disulfides connect Cys3–Cys24, Cys17–Cys42, Cys46–Cys57, and Cys58–Cys63.

This sequence belongs to the three-finger toxin family. Short-chain subfamily. Aminergic toxin sub-subfamily. In terms of assembly, monomer. Expressed by the venom gland.

Its subcellular location is the secreted. In terms of biological role, binds irreversibly and specifically to M1 (CHRM1) muscarinic acetylcholine receptors, blocking further binding of antagonists and preventing the action of agonists. This chain is Muscarinic m1-toxin2, found in Dendroaspis angusticeps (Eastern green mamba).